A 304-amino-acid polypeptide reads, in one-letter code: 33 kDa chaperonin (304 aa).

Intrachain disulfides connect Cys245–Cys247 and Cys278–Cys281.

This sequence belongs to the HSP33 family. Under oxidizing conditions two disulfide bonds are formed involving the reactive cysteines. Under reducing conditions zinc is bound to the reactive cysteines and the protein is inactive.

The protein resides in the cytoplasm. Redox regulated molecular chaperone. Protects both thermally unfolding and oxidatively damaged proteins from irreversible aggregation. Plays an important role in the bacterial defense system toward oxidative stress. The polypeptide is 33 kDa chaperonin (Microcystis aeruginosa (strain NIES-843 / IAM M-2473)).